We begin with the raw amino-acid sequence, 417 residues long: Serine hydroxymethyltransferase (417 aa).

(6S)-5,6,7,8-tetrahydrofolate contacts are provided by residues Leu121 and 125 to 127; that span reads GHL. At Lys229 the chain carries N6-(pyridoxal phosphate)lysine. 355-357 contributes to the (6S)-5,6,7,8-tetrahydrofolate binding site; that stretch reads SPF.

Belongs to the SHMT family. As to quaternary structure, homodimer. Pyridoxal 5'-phosphate is required as a cofactor.

The protein localises to the cytoplasm. It carries out the reaction (6R)-5,10-methylene-5,6,7,8-tetrahydrofolate + glycine + H2O = (6S)-5,6,7,8-tetrahydrofolate + L-serine. The protein operates within one-carbon metabolism; tetrahydrofolate interconversion. It participates in amino-acid biosynthesis; glycine biosynthesis; glycine from L-serine: step 1/1. Functionally, catalyzes the reversible interconversion of serine and glycine with tetrahydrofolate (THF) serving as the one-carbon carrier. This reaction serves as the major source of one-carbon groups required for the biosynthesis of purines, thymidylate, methionine, and other important biomolecules. Also exhibits THF-independent aldolase activity toward beta-hydroxyamino acids, producing glycine and aldehydes, via a retro-aldol mechanism. This Klebsiella pneumoniae (strain 342) protein is Serine hydroxymethyltransferase.